We begin with the raw amino-acid sequence, 807 residues long: Ribosome biogenesis protein ERB1 (807 aa).

The segment at 1–112 (MMAKNNKTTE…DTTSLTDRLS (112 aa)) is disordered. Composition is skewed to acidic residues over residues 21 to 30 (EESDVEEDED) and 42 to 56 (EASE…YESA). Position 23 is a phosphoserine (Ser23). A compositionally biased stretch (basic and acidic residues) spans 57 to 69 (VEEKESSSDKEAQ). 2 positions are modified to phosphoserine: Ser72 and Ser76. Over residues 86–102 (EEEGDEEEDYDSSEFSD) the composition is skewed to acidic residues. Lys127 participates in a covalent cross-link: Glycyl lysine isopeptide (Lys-Gly) (interchain with G-Cter in ubiquitin). Ser146 and Ser149 each carry phosphoserine. The interval 265–383 (RFVPSKNEAK…LRKVPGYGES (119 aa)) is required for interaction with NOP7. Residues 383–419 (SIRERFERSLDLYLAPRVRKNKLNIDPNSLIPELPSP) form a required for interaction with YTM1 region. Ser418 carries the post-translational modification Phosphoserine. 7 WD repeats span residues 435–474 (GHKG…EVYR), 483–523 (NPDD…YDIE), 592–634 (SCKK…TQSP), 637–675 (KSKG…LVKK), 678–717 (PGAR…TPYK), 721–760 (YHEK…DMMK), and 776–807 (INSL…LWTT).

This sequence belongs to the WD repeat BOP1/ERB1 family. Component of the NOP7 complex, composed of ERB1, NOP7 and YTM1. The complex is held together by ERB1, which interacts with NOP7 via its N-terminal domain and with YTM1 via a high-affinity interaction between the seven-bladed beta-propeller domains of the 2 proteins. The NOP7 complex associates with the 66S pre-ribosome.

It localises to the nucleus. Its subcellular location is the nucleolus. The protein resides in the nucleoplasm. In terms of biological role, component of the NOP7 complex, which is required for maturation of the 25S and 5.8S ribosomal RNAs and formation of the 60S ribosome. This Saccharomyces cerevisiae (strain YJM789) (Baker's yeast) protein is Ribosome biogenesis protein ERB1.